A 425-amino-acid polypeptide reads, in one-letter code: Dihydroorotase (425 aa).

His59 and His61 together coordinate Zn(2+). Substrate contacts are provided by residues 61–63 (HLR) and Asn93. Zn(2+) is bound by residues Asp151, His178, and His231. Residue Asn277 coordinates substrate. Residue Asp304 participates in Zn(2+) binding. Asp304 is a catalytic residue. Substrate-binding positions include His308 and 322–323 (FG).

It belongs to the metallo-dependent hydrolases superfamily. DHOase family. Class I DHOase subfamily. It depends on Zn(2+) as a cofactor.

The catalysed reaction is (S)-dihydroorotate + H2O = N-carbamoyl-L-aspartate + H(+). It participates in pyrimidine metabolism; UMP biosynthesis via de novo pathway; (S)-dihydroorotate from bicarbonate: step 3/3. Functionally, catalyzes the reversible cyclization of carbamoyl aspartate to dihydroorotate. This chain is Dihydroorotase, found in Staphylococcus epidermidis (strain ATCC 35984 / DSM 28319 / BCRC 17069 / CCUG 31568 / BM 3577 / RP62A).